We begin with the raw amino-acid sequence, 406 residues long: COP9 signalosome complex subunit 4 (406 aa).

N-acetylalanine is present on Ala2. Residue Lys25 is modified to N6-acetyllysine. The 170-residue stretch at 197–366 folds into the PCI domain; sequence YRRKFIEAAQ…GIVHFETREA (170 aa).

Belongs to the CSN4 family. In terms of assembly, component of the CSN complex, composed of COPS1/GPS1, COPS2, COPS3, COPS4, COPS5, COPS6, COPS7 (COPS7A or COPS7B), COPS8 and COPS9. In the complex, it probably interacts directly with COPS1, COPS2, COPS3, COPS5, COPS6, COPS7 (COPS7A or COPS7B) and COPS8. Interacts with TOR1A; the interaction is direct and associates TOR1A and SNAPIN with the CSN complex. Interacts with STON2; controls STON2 neddylation levels. Interacts with ERCC6.

The protein resides in the cytoplasm. The protein localises to the nucleus. It localises to the cytoplasmic vesicle. It is found in the secretory vesicle. Its subcellular location is the synaptic vesicle. In terms of biological role, component of the COP9 signalosome complex (CSN), a complex involved in various cellular and developmental processes. The CSN complex is an essential regulator of the ubiquitin (Ubl) conjugation pathway by mediating the deneddylation of the cullin subunits of SCF-type E3 ligase complexes, leading to decrease the Ubl ligase activity of SCF-type complexes such as SCF, CSA or DDB2. Also involved in the deneddylation of non-cullin subunits such as STON2. The complex is also involved in phosphorylation of p53/TP53, c-jun/JUN, IkappaBalpha/NFKBIA, ITPK1, IRF8/ICSBP and SNAPIN, possibly via its association with CK2 and PKD kinases. CSN-dependent phosphorylation of TP53 and JUN promotes and protects degradation by the Ubl system, respectively. The protein is COP9 signalosome complex subunit 4 (Cops4) of Mus musculus (Mouse).